A 545-amino-acid polypeptide reads, in one-letter code: Chaperonin GroEL (545 aa).

ATP-binding positions include 29 to 32 (TLGP), Lys-50, 86 to 90 (DGTTT), Gly-413, and Asp-495.

This sequence belongs to the chaperonin (HSP60) family. In terms of assembly, forms a cylinder of 14 subunits composed of two heptameric rings stacked back-to-back. Interacts with the co-chaperonin GroES.

It localises to the cytoplasm. It carries out the reaction ATP + H2O + a folded polypeptide = ADP + phosphate + an unfolded polypeptide.. Together with its co-chaperonin GroES, plays an essential role in assisting protein folding. The GroEL-GroES system forms a nano-cage that allows encapsulation of the non-native substrate proteins and provides a physical environment optimized to promote and accelerate protein folding. The protein is Chaperonin GroEL of Borreliella burgdorferi (strain ATCC 35210 / DSM 4680 / CIP 102532 / B31) (Borrelia burgdorferi).